A 257-amino-acid chain; its full sequence is Cilia- and flagella-associated protein 300 (257 aa).

Belongs to the CFAP300 family.

It is found in the cytoplasm. Its subcellular location is the cytoskeleton. The protein resides in the flagellum axoneme. Its function is as follows. Cilium- and flagellum-specific protein that plays a role in axonemal structure organization and motility. Plays a role in outer and inner dynein arm assembly. The protein is Cilia- and flagella-associated protein 300 of Chlamydomonas reinhardtii (Chlamydomonas smithii).